The primary structure comprises 396 residues: Glideosome-associated protein 50 (396 aa).

Residues 1 to 369 are Lumenal-facing; that stretch reads MNYCKTTFHI…PMGNKDTFVR (369 aa). 2 residues coordinate a metal cation: His-195 and His-256. A helical transmembrane segment spans residues 370 to 390; it reads VVGTIGILIGSVIVFIGASSF. Residues 391-396 lie on the Cytoplasmic side of the membrane; the sequence is LSKNMK.

It belongs to the metallophosphoesterase superfamily. Purple acid phosphatase family. In terms of assembly, component of the glideosome complex composed of GAP50, GAP45, MTIP and MyoA; the complex is formed during the late schizont stage and in merozoites. MyoA, MTIP and GAP45 probably form an initial complex in the cytoplasm which is then recruited to the outer face of the inner membrane complex via the interaction with GAP50. Interacts with GAP45; the interaction is independent of GAP45 phosphorylation status and can also occur independently of the formation of the glideosome complex. Interacts with human factor H isoform CFH (via sushi 6-7 domains) and isoform FHL-1 (via sushi 6-7 domains); the interaction occurs in the vector mosquito midgut at the surface of activated gametocytes; the interaction protects the parasite from alternative complement pathway-mediated elimination. It depends on a metal cation as a cofactor. The N-terminus signal is likely to be cleaved.

It localises to the inner membrane complex. It is found in the cell membrane. The protein resides in the endoplasmic reticulum membrane. It catalyses the reaction a phosphate monoester + H2O = an alcohol + phosphate. With respect to regulation, activity is independent of metal ions. Component of the glideosome complex, an inner membrane complex structure involved in parasite gliding motility and host cell invasion. During the asexual blood stage, may play a role in the assembly and anchoring of the glideosome complex to the inner membrane complex. During the sexual stage in the vector mosquito midgut, protects gametocytes against host alternative complement pathway-mediated elimination by interacting with host complement inhibitor factor H. Has phosphatase activity towards nucleotides such as ATP, vitamins B1 and B6, phosphorylated sugars, glycerol phosphates and inositol triphosphates. However, the phosphatase activity is controversial. The chain is Glideosome-associated protein 50 from Plasmodium falciparum (isolate 3D7).